Reading from the N-terminus, the 711-residue chain is Myb-like protein B (711 aa).

Over residues 24–50 (QPQQSIQQQQQQQQQQQQQQQQQQQQQ) the composition is skewed to low complexity. 2 disordered regions span residues 24 to 70 (QPQQ…SPQL) and 113 to 235 (NYHT…IINN). 2 stretches are compositionally biased toward polar residues: residues 113-139 (NYHT…SPPT) and 148-157 (TPLSSSTGFS). Low complexity-rich tracts occupy residues 158–187 (NNNN…NNNI) and 198–235 (NNYP…IINN). HTH myb-type domains lie at 428-490 (RESI…SPEI) and 491-542 (KKGS…SRQT). 2 DNA-binding regions (H-T-H motif) span residues 462 to 486 (WKKI…KRVL) and 514 to 538 (WKNV…KAIM). The 59-residue stretch at 540-598 (RQTEWNQLEDDILTKKIKLMTQNNEKISFQQVSKHLARAKTTKIPRTALECKSRWSQLN) folds into the Myb-like domain. Residues 598 to 640 (NSTNVNNNNNNNNNSITTSSSNTNQQQQSTMVTPTSSPLSSPI) form a disordered region.

It is found in the nucleus. Transcriptional activator that initiates multicellular development by induction of adenylyl cyclase expression. This Dictyostelium discoideum (Social amoeba) protein is Myb-like protein B (mybB).